A 239-amino-acid polypeptide reads, in one-letter code: Purine nucleoside phosphorylase DeoD-type (239 aa).

His5 contacts a purine D-ribonucleoside. Residues Gly21, Arg25, Arg44, and 88–91 (RIGS) contribute to the phosphate site. A purine D-ribonucleoside-binding positions include 180 to 182 (EME) and 204 to 205 (TD). Asp205 functions as the Proton donor in the catalytic mechanism.

This sequence belongs to the PNP/UDP phosphorylase family. As to quaternary structure, homohexamer; trimer of homodimers.

The enzyme catalyses a purine D-ribonucleoside + phosphate = a purine nucleobase + alpha-D-ribose 1-phosphate. It carries out the reaction a purine 2'-deoxy-D-ribonucleoside + phosphate = a purine nucleobase + 2-deoxy-alpha-D-ribose 1-phosphate. Functionally, catalyzes the reversible phosphorolytic breakdown of the N-glycosidic bond in the beta-(deoxy)ribonucleoside molecules, with the formation of the corresponding free purine bases and pentose-1-phosphate. The chain is Purine nucleoside phosphorylase DeoD-type from Aliivibrio fischeri (strain ATCC 700601 / ES114) (Vibrio fischeri).